A 324-amino-acid polypeptide reads, in one-letter code: Probable peptidylglycine alpha-hydroxylating monooxygenase 1 (324 aa).

A signal peptide spans 1–22; the sequence is MPRFYLLSSCALLAFATSFCNA. 2 disulfide bridges follow: C41–C85 and C73–C101. 2 residues coordinate Cu cation: H66 and H67. H142 is a Cu cation binding site. N182 is a glycosylation site (N-linked (GlcNAc...) asparagine). Positions 207, 209, and 284 each coordinate Cu cation. A disulfide bond links C264 and C285.

It belongs to the copper type II ascorbate-dependent monooxygenase family. Requires Cu(2+) as cofactor.

It localises to the secreted. The enzyme catalyses a [peptide]-C-terminal glycine + 2 L-ascorbate + O2 = a [peptide]-C-terminal (2S)-2-hydroxyglycine + 2 monodehydro-L-ascorbate radical + H2O. Monooxygenase that catalyzes an essential reaction in C-terminal alpha-amidation of peptides. Produces an unstable peptidyl(2-hydroxyglycine) intermediate. C-terminal amidation of peptides such as neuropeptides is essential for full biological activity. The polypeptide is Probable peptidylglycine alpha-hydroxylating monooxygenase 1 (Caenorhabditis elegans).